A 687-amino-acid chain; its full sequence is Putative pentatricopeptide repeat-containing protein At3g15930 (687 aa).

PPR repeat units follow at residues 98-132 (DVVV…GVTP), 133-168 (DSHT…GLGS), 169-199 (NLYV…RCKE), 200-234 (DVFS…LVSP), 235-269 (TSVT…KTEP), 270-304 (SLRL…DVIS), 305-331 (WTSI…MPVR), 332-366 (DRIS…GMIP), 367-401 (DEFT…KIKN), 402-432 (DVVV…MDQR), 433-467 (DKFT…SIQP), 468-498 (DDIT…MRSD), and 504-534 (SLVH…MPMN). Residues 539-614 (VWGALLGASR…TPGFSLIEVN (76 aa)) are type E motif. A type E(+) motif region spans residues 615–645 (GFAHEFVAGDKSHLQSEEIYMKLEELAQEST).

It belongs to the PPR family. PCMP-E subfamily.

This Arabidopsis thaliana (Mouse-ear cress) protein is Putative pentatricopeptide repeat-containing protein At3g15930 (PCMP-E51).